Reading from the N-terminus, the 507-residue chain is GMP synthase [glutamine-hydrolyzing] 1 (507 aa).

The Glutamine amidotransferase type-1 domain maps to 4 to 193; it reads KIIILDFGSQ…VVDVCGCKQD (190 aa). C79 functions as the Nucleophile in the catalytic mechanism. Active-site residues include H167 and E169. Residues 194–382 enclose the GMPS ATP-PPase domain; the sequence is WSPASFIEST…LGMPEHLITR (189 aa). 221 to 227 is an ATP binding site; the sequence is SGGVDSS.

As to quaternary structure, homodimer.

It catalyses the reaction XMP + L-glutamine + ATP + H2O = GMP + L-glutamate + AMP + diphosphate + 2 H(+). It functions in the pathway purine metabolism; GMP biosynthesis; GMP from XMP (L-Gln route): step 1/1. Functionally, catalyzes the synthesis of GMP from XMP. This Bacteroides thetaiotaomicron (strain ATCC 29148 / DSM 2079 / JCM 5827 / CCUG 10774 / NCTC 10582 / VPI-5482 / E50) protein is GMP synthase [glutamine-hydrolyzing] 1 (guaA1).